A 485-amino-acid polypeptide reads, in one-letter code: Serine/threonine-protein kinase dst4 (485 aa).

Residues 21-278 enclose the Protein kinase domain; that stretch reads FRVLEVIGQG…AVDLLNHPFI (258 aa). ATP contacts are provided by residues 27–35 and Lys-50; that span reads IGQGSFGVV. Asp-142 (proton acceptor) is an active-site residue. Disordered stretches follow at residues 304–343, 360–424, and 436–485; these read RRKKAEEEEAEEAEEGDDYDDVNGGGDERQHGSSVSSAGL, VMRE…GSVV, and SMKL…NQDD. A compositionally biased stretch (acidic residues) spans 310–324; it reads EEEAEEAEEGDDYDD. A compositionally biased stretch (low complexity) spans 370-393; it reads SNNGGTFIYNNNNNNSSKTSSSGT. Composition is skewed to acidic residues over residues 406 to 417 and 450 to 468; these read DDDDDDDIEEGG and SSDEEDEEDEDDEDDEEGG. Positions 474-485 are enriched in polar residues; the sequence is VVYTKSPVNQDD.

The protein belongs to the protein kinase superfamily. STE Ser/Thr protein kinase family. STE20 subfamily. The cofactor is Mg(2+).

It catalyses the reaction L-seryl-[protein] + ATP = O-phospho-L-seryl-[protein] + ADP + H(+). The enzyme catalyses L-threonyl-[protein] + ATP = O-phospho-L-threonyl-[protein] + ADP + H(+). This Dictyostelium discoideum (Social amoeba) protein is Serine/threonine-protein kinase dst4.